The following is a 903-amino-acid chain: Valine--tRNA ligase (903 aa).

Residues 1–15 show a composition bias toward polar residues; the sequence is MVCVTDQNNETTSQN. The segment at 1 to 21 is disordered; it reads MVCVTDQNNETTSQNRADKLP. Positions 61-71 match the 'HIGH' region motif; that stretch reads PNVTGQLHMGH. The 'KMSKS' region motif lies at 552-556; sequence KMSKS. Lysine 555 contributes to the ATP binding site. A coiled-coil region spans residues 836–903; the sequence is TVDVAAERKR…RINKRLEELA (68 aa).

The protein belongs to the class-I aminoacyl-tRNA synthetase family. ValS type 1 subfamily. As to quaternary structure, monomer.

Its subcellular location is the cytoplasm. The enzyme catalyses tRNA(Val) + L-valine + ATP = L-valyl-tRNA(Val) + AMP + diphosphate. Functionally, catalyzes the attachment of valine to tRNA(Val). As ValRS can inadvertently accommodate and process structurally similar amino acids such as threonine, to avoid such errors, it has a 'posttransfer' editing activity that hydrolyzes mischarged Thr-tRNA(Val) in a tRNA-dependent manner. The chain is Valine--tRNA ligase from Corynebacterium glutamicum (strain ATCC 13032 / DSM 20300 / JCM 1318 / BCRC 11384 / CCUG 27702 / LMG 3730 / NBRC 12168 / NCIMB 10025 / NRRL B-2784 / 534).